Here is a 124-residue protein sequence, read N- to C-terminus: Calvin cycle protein CP12-1, chloroplastic (124 aa).

The transit peptide at 1–47 (MTTIAAAGLNVATPRVVVRPVARVLGPVRLNYPWKFGSMKRMVVVKA) directs the protein to the chloroplast. 2 cysteine pairs are disulfide-bonded: Cys-68/Cys-77 and Cys-110/Cys-119. A disordered region spans residues 90–124 (AASHARDKKKAGGSDPLEEYCNDNPETDECRTYDN). Over residues 105 to 116 (PLEEYCNDNPET) the composition is skewed to acidic residues.

Belongs to the CP12 family. In terms of assembly, monomer. Component of a complex that contains two dimers of PRK, two tetramers of GAPDH and CP12. CP12 associates with GAPDH, causing its conformation to change. This GAPDH/CP12 complex binds PRK to form a half-complex (one unit). This unit probably dimerizes due partially to interactions between the enzymes of each unit. Post-translationally, contains two disulfide bonds; only the oxidized protein, with two disulfide bonds, is active in complex formation. The C-terminal disulfide is involved in the interaction with GAPDH and the N-terminal disulfide mediates the binding of PRK with this binary complex. In terms of tissue distribution, mostly expressed in flowers, hypocotyl, cotyledons, leaves, stems, and flower stalks. Barely detectable in roots and siliques. Present in root tips and lateral roots. Accumulates in the cotyledons of etiolated seedlings.

It localises to the plastid. Its subcellular location is the chloroplast. Acts as a linker essential in the assembly of a core complex of PRK/GAPDH. Coordinates the reversible inactivation of chloroplast enzymes GAPDH and PRK during darkness in photosynthetic tissues. The protein is Calvin cycle protein CP12-1, chloroplastic (CP12-1) of Arabidopsis thaliana (Mouse-ear cress).